Consider the following 225-residue polypeptide: 2-C-methyl-D-erythritol 4-phosphate cytidylyltransferase (225 aa).

Belongs to the IspD/TarI cytidylyltransferase family. IspD subfamily.

The enzyme catalyses 2-C-methyl-D-erythritol 4-phosphate + CTP + H(+) = 4-CDP-2-C-methyl-D-erythritol + diphosphate. The protein operates within isoprenoid biosynthesis; isopentenyl diphosphate biosynthesis via DXP pathway; isopentenyl diphosphate from 1-deoxy-D-xylulose 5-phosphate: step 2/6. Catalyzes the formation of 4-diphosphocytidyl-2-C-methyl-D-erythritol from CTP and 2-C-methyl-D-erythritol 4-phosphate (MEP). This Cereibacter sphaeroides (strain KD131 / KCTC 12085) (Rhodobacter sphaeroides) protein is 2-C-methyl-D-erythritol 4-phosphate cytidylyltransferase.